A 158-amino-acid polypeptide reads, in one-letter code: UPF0758 protein VC_1786 (158 aa).

The region spanning 37 to 158 is the MPN domain; that stretch reads TFARTENTTE…SVSFAERGWL (122 aa). Zn(2+)-binding residues include His-108, His-110, and Asp-121. The JAMM motif signature appears at 108–121; that stretch reads HNHPSGDPEPSQAD.

This sequence belongs to the UPF0758 family.

This chain is UPF0758 protein VC_1786, found in Vibrio cholerae serotype O1 (strain ATCC 39315 / El Tor Inaba N16961).